A 2045-amino-acid polypeptide reads, in one-letter code: Non-reducing polyketide synthase pks27 (2045 aa).

Residues 10 to 247 (IVFGDLTCDS…LTIPIYAPYH (238 aa)) form an N-terminal acylcarrier protein transacylase domain (SAT) region. The 434-residue stretch at 380 to 813 (HSKLAIIGYS…GGNSSVLIED (434 aa)) folds into the Ketosynthase family 3 (KS3) domain. Active-site for beta-ketoacyl synthase activity residues include Cys552, His687, and His731. Positions 913 to 1213 (FAFTGQGSQY…VPTLQRNKDT (301 aa)) are malonyl-CoA:ACP transacylase (MAT) domain. Residues 1289–1422 (HKLVEEKKDG…ASITFPDAKA (134 aa)) form an N-terminal hotdog fold region. Residues 1289–1599 (HKLVEEKKDG…AQGVPRRLMD (311 aa)) form the PKS/mFAS DH domain. His1321 functions as the Proton acceptor; for dehydratase activity in the catalytic mechanism. Positions 1442-1599 (AARLNTDDRV…AQGVPRRLMD (158 aa)) are C-terminal hotdog fold. The active-site Proton donor; for dehydratase activity is Asp1511. The segment at 1612-1636 (APAGGTLNASQSAAANPAADPSAQA) is disordered. Over residues 1619-1636 (NASQSAAANPAADPSAQA) the composition is skewed to low complexity. A Carrier domain is found at 1635-1712 (QADSDNWQAA…ELEAFWKQGA (78 aa)). A product template (PT) domain region spans residues 1640 to 1709 (NWQAALKIIS…TIKELEAFWK (70 aa)). Ser1672 bears the O-(pantetheine 4'-phosphoryl)serine mark. Positions 1735–1776 (EAEVDQDKNSSDEDRSSLGTSSYEVISPNTTETTPEITKTSS) are disordered. Residues 1739 to 1750 (DQDKNSSDEDRS) show a composition bias toward basic and acidic residues. Residues 1760-1776 (ISPNTTETTPEITKTSS) are compositionally biased toward low complexity. The interval 1798-2039 (TLFLLPDGSG…AKRLSEMIEG (242 aa)) is thioesterase.

Pantetheine 4'-phosphate is required as a cofactor.

The protein operates within secondary metabolite biosynthesis. Non-reducing polyketide synthase (NRPKS); part of the gene cluster 27 that mediates the biosynthesis of asparasone A, a sclerotium-specific anthraquinone pigment important for sclerotial survival. Catalyzes the formation of the aromatic polyketide from acetyl coenzyme A and seven malonyl coenzyme A molecules. Through its product template (PT) domain, catalyzes the cyclization of polyketide backbone via C6-C11 aldolcondensation. This is Non-reducing polyketide synthase pks27 from Aspergillus flavus (strain ATCC 200026 / FGSC A1120 / IAM 13836 / NRRL 3357 / JCM 12722 / SRRC 167).